The primary structure comprises 114 residues: Somatostatin-1A (114 aa).

The signal sequence occupies residues 1–24 (MLSTRIQCALALLSLALAVCSVSA). Positions 25-88 (APTDAKLRQL…KDEVRLELER (64 aa)) are excised as a propeptide. Residues C103 and C114 are joined by a disulfide bond.

The protein belongs to the somatostatin family.

Its subcellular location is the secreted. Somatostatin inhibits the release of somatotropin. The protein is Somatostatin-1A (sst1a) of Carassius auratus (Goldfish).